Consider the following 189-residue polypeptide: Ornithine decarboxylase antizyme 2 (189 aa).

The residue at position 186 (S186) is a Phosphoserine.

It belongs to the ODC antizyme family. Interacts with ODC1 and thereby sterically blocks ODC homodimerization. Interacts with AZIN2; this interaction disrupts the interaction between the antizyme and ODC1.

The protein resides in the nucleus. Functionally, ornithine decarboxylase (ODC) antizyme protein that negatively regulates ODC activity and intracellular polyamine biosynthesis and uptake in response to increased intracellular polyamine levels. Binds to ODC monomers, inhibiting the assembly of the functional ODC homodimers. Does not target the ODC monomers for degradation, which allows a protein synthesis-independent restoration of ODC activity. Involved in the translocation of AZIN2 from ER-Golgi intermediate compartment (ERGIC) to the cytosol. The sequence is that of Ornithine decarboxylase antizyme 2 (Oaz2) from Mus musculus (Mouse).